Reading from the N-terminus, the 155-residue chain is Small ribosomal subunit protein uS7 (155 aa).

This sequence belongs to the universal ribosomal protein uS7 family. In terms of assembly, part of the 30S ribosomal subunit. Contacts proteins S9 and S11.

One of the primary rRNA binding proteins, it binds directly to 16S rRNA where it nucleates assembly of the head domain of the 30S subunit. Is located at the subunit interface close to the decoding center, probably blocks exit of the E-site tRNA. This is Small ribosomal subunit protein uS7 from Pelodictyon phaeoclathratiforme (strain DSM 5477 / BU-1).